The primary structure comprises 78 residues: Cytochrome c oxidase subunit 8, mitochondrial (78 aa).

Residues M1–S27 constitute a mitochondrion transit peptide. The Mitochondrial matrix portion of the chain corresponds to V28–L51. Residues S52 to K73 form a helical membrane-spanning segment. Position 74 (K74) is a topological domain, mitochondrial intermembrane. Residues S75–F78 constitute a propeptide that is removed on maturation.

It belongs to the cytochrome c oxidase VIIc family. In terms of assembly, component of the cytochrome c oxidase (complex IV, CIV), a multisubunit enzyme composed of 12 subunits. The complex is composed of a catalytic core of 3 subunits COX1, COX2 and COX3, encoded in the mitochondrial DNA, and 9 supernumerary subunits COX4, COX5A (or COX5B), COX6, COX7, COX8, COX9, COX12, COX13 and COX26, which are encoded in the nuclear genome. The complex exists as a monomer or a dimer and forms supercomplexes (SCs) in the inner mitochondrial membrane with a dimer of ubiquinol-cytochrome c oxidoreductase (cytochrome b-c1 complex, complex III, CIII), resulting in 2 different assemblies (supercomplexes III(2)IV and III(2)IV(2)).

Its subcellular location is the mitochondrion inner membrane. The protein operates within energy metabolism; oxidative phosphorylation. Functionally, component of the cytochrome c oxidase, the last enzyme in the mitochondrial electron transport chain which drives oxidative phosphorylation. The respiratory chain contains 3 multisubunit complexes succinate dehydrogenase (complex II, CII), ubiquinol-cytochrome c oxidoreductase (cytochrome b-c1 complex, complex III, CIII) and cytochrome c oxidase (complex IV, CIV), that cooperate to transfer electrons derived from NADH and succinate to molecular oxygen, creating an electrochemical gradient over the inner membrane that drives transmembrane transport and the ATP synthase. Cytochrome c oxidase is the component of the respiratory chain that catalyzes the reduction of oxygen to water. Electrons originating from reduced cytochrome c in the intermembrane space (IMS) are transferred via the dinuclear copper A center (CU(A)) of COX2 and heme A of COX1 to the active site in COX1, a binuclear center (BNC) formed by heme A3 and copper B (CU(B)). The BNC reduces molecular oxygen to 2 water molecules using 4 electrons from cytochrome c in the IMS and 4 protons from the mitochondrial matrix. In Saccharomyces cerevisiae (strain ATCC 204508 / S288c) (Baker's yeast), this protein is Cytochrome c oxidase subunit 8, mitochondrial (COX8).